Consider the following 267-residue polypeptide: WUSCHEL-related homeobox 8 (267 aa).

The segment at residues Thr-88–Gln-152 is a DNA-binding region (homeobox; WUS-type). The segment at Ser-148–Arg-195 is disordered. The segment covering Pro-171 to Arg-195 has biased composition (basic and acidic residues).

The protein belongs to the WUS homeobox family.

It localises to the nucleus. Transcription factor which may be involved in developmental processes. The protein is WUSCHEL-related homeobox 8 (WOX8) of Oryza sativa subsp. japonica (Rice).